A 101-amino-acid polypeptide reads, in one-letter code: Large ribosomal subunit protein uL24 (101 aa).

This sequence belongs to the universal ribosomal protein uL24 family. Part of the 50S ribosomal subunit.

One of two assembly initiator proteins, it binds directly to the 5'-end of the 23S rRNA, where it nucleates assembly of the 50S subunit. Functionally, one of the proteins that surrounds the polypeptide exit tunnel on the outside of the subunit. The chain is Large ribosomal subunit protein uL24 from Streptococcus uberis (strain ATCC BAA-854 / 0140J).